Reading from the N-terminus, the 136-residue chain is Small ribosomal subunit protein uS9 (136 aa).

Belongs to the universal ribosomal protein uS9 family.

The polypeptide is Small ribosomal subunit protein uS9 (Borrelia garinii subsp. bavariensis (strain ATCC BAA-2496 / DSM 23469 / PBi) (Borreliella bavariensis)).